A 295-amino-acid chain; its full sequence is Dual specificity protein phosphatase 15 (295 aa).

The Tyrosine-protein phosphatase domain occupies 1–141 (MTEGVLPGLY…LEEFGWASSQ (141 aa)). Residue threonine 2 is the site of N-myristoyl glycine attachment. The active-site Phosphocysteine intermediate is cysteine 85. A compositionally biased stretch (polar residues) spans 251–270 (SSSCTLSASTERPDGSSTPG). Residues 251–272 (SSSCTLSASTERPDGSSTPGNP) form a disordered region.

The protein belongs to the protein-tyrosine phosphatase family. Non-receptor class dual specificity subfamily. As to expression, highly expressed in testis. Expressed in brain; up-regulated in patients with multiple sclerosis gray matter lesions.

The protein localises to the cytoplasm. The protein resides in the cell membrane. The enzyme catalyses O-phospho-L-tyrosyl-[protein] + H2O = L-tyrosyl-[protein] + phosphate. It catalyses the reaction O-phospho-L-seryl-[protein] + H2O = L-seryl-[protein] + phosphate. The catalysed reaction is O-phospho-L-threonyl-[protein] + H2O = L-threonyl-[protein] + phosphate. May dephosphorylate MAPK13, ATF2, ERBB3, PDGFRB and SNX6. In terms of biological role, may play a role in the regulation of oligodendrocyte differentiation. May play a role in the regulation of myelin formation. Involved in the regulation of Erk1/2 phosphorylation in Schwann cells; the signaling may be linked to the regulation of myelination. This chain is Dual specificity protein phosphatase 15, found in Homo sapiens (Human).